Reading from the N-terminus, the 491-residue chain is Cobyric acid synthase (491 aa).

The GATase cobBQ-type domain occupies E250–W439. C331 acts as the Nucleophile in catalysis. Residue H431 is part of the active site.

The protein belongs to the CobB/CobQ family. CobQ subfamily.

Its pathway is cofactor biosynthesis; adenosylcobalamin biosynthesis. Its function is as follows. Catalyzes amidations at positions B, D, E, and G on adenosylcobyrinic A,C-diamide. NH(2) groups are provided by glutamine, and one molecule of ATP is hydrogenolyzed for each amidation. This Synechococcus sp. (strain ATCC 27144 / PCC 6301 / SAUG 1402/1) (Anacystis nidulans) protein is Cobyric acid synthase.